A 446-amino-acid polypeptide reads, in one-letter code: Mannosyltransferase KTR6 (446 aa).

Over 1-8 (MHVLLSKK) the chain is Cytoplasmic. A helical; Signal-anchor for type II membrane protein membrane pass occupies residues 9-29 (IARFLLISFVFVLALMVTINH). The tract at residues 30–114 (PKTKQMSEQY…MVPSYINHRG (85 aa)) is stem region. Topologically, residues 30–446 (PKTKQMSEQY…DKPEGWDRLP (417 aa)) are lumenal. N-linked (GlcNAc...) asparagine glycans are attached at residues N82 and N98. Positions 115-446 (SPPKACFVSL…DKPEGWDRLP (332 aa)) are catalytic. Residue E334 is the Nucleophile of the active site.

It belongs to the glycosyltransferase 15 family.

Its subcellular location is the membrane. It functions in the pathway protein modification; protein glycosylation. Glycosyltransferase that transfers an alpha-D-mannosyl residue from GDP-mannose into lipid-linked oligosaccharide, forming an alpha-(1-&gt;2)-D-mannosyl-D-mannose linkage. Required for addition of mannosylphosphate in yeast mannan. Recognizes any oligosaccharides with at least one alpha-1,2-linked mannobiose unit. In Saccharomyces cerevisiae (strain ATCC 204508 / S288c) (Baker's yeast), this protein is Mannosyltransferase KTR6 (KTR6).